The sequence spans 688 residues: uncharacterized protein (688 aa).

This is an uncharacterized protein from Saccharomyces cerevisiae (strain ATCC 204508 / S288c) (Baker's yeast).